The sequence spans 338 residues: MLGRCFPPDTKEKQQLRMTKLCDPAESELSPFLITLILAVLLAEYLIGIIANGFIMAIHAAEWVQNKAVSTSGRILVFLSVSRIALQSLMMLEITISSTSLSFYSEDAVYYAFKISFIFLNFCSLWFAAWLSFFYFVKIANFSYPLFLKLRWRITGLIPWLLWLSVFISFSHSMFCINICTVYCNNSFPIHSSNSTKKTYLSEINVVGLAFFFNLGIVTPLIMFILTATLLILSLKRHTLHMGSNATGSNDPSMEAHMGAIKAISYFLILYIFNAVALFIYLSNMFDINSLWNNLCQIIMAAYPAGHSILPIQDNPGLRRAWKRLQLRLHLYPKEWTL.

At 1–30 the chain is on the extracellular side; that stretch reads MLGRCFPPDTKEKQQLRMTKLCDPAESELS. A helical membrane pass occupies residues 31 to 51; sequence PFLITLILAVLLAEYLIGIIA. The Cytoplasmic portion of the chain corresponds to 52–74; sequence NGFIMAIHAAEWVQNKAVSTSGR. Residues 75–95 traverse the membrane as a helical segment; the sequence is ILVFLSVSRIALQSLMMLEIT. Residues 96–116 lie on the Extracellular side of the membrane; sequence ISSTSLSFYSEDAVYYAFKIS. Residues 117-137 traverse the membrane as a helical segment; the sequence is FIFLNFCSLWFAAWLSFFYFV. At 138–156 the chain is on the cytoplasmic side; the sequence is KIANFSYPLFLKLRWRITG. The chain crosses the membrane as a helical span at residues 157–177; the sequence is LIPWLLWLSVFISFSHSMFCI. Topologically, residues 178 to 205 are extracellular; it reads NICTVYCNNSFPIHSSNSTKKTYLSEIN. 2 N-linked (GlcNAc...) asparagine glycosylation sites follow: asparagine 185 and asparagine 194. Residues 206–226 form a helical membrane-spanning segment; sequence VVGLAFFFNLGIVTPLIMFIL. At 227–262 the chain is on the cytoplasmic side; the sequence is TATLLILSLKRHTLHMGSNATGSNDPSMEAHMGAIK. Residues 263-283 form a helical membrane-spanning segment; sequence AISYFLILYIFNAVALFIYLS. The Extracellular segment spans residues 284–291; it reads NMFDINSL. A helical membrane pass occupies residues 292–312; the sequence is WNNLCQIIMAAYPAGHSILPI. The Cytoplasmic portion of the chain corresponds to 313-338; that stretch reads QDNPGLRRAWKRLQLRLHLYPKEWTL.

Belongs to the G-protein coupled receptor T2R family.

It is found in the membrane. Receptor that may play a role in the perception of bitterness and is gustducin-linked. May play a role in sensing the chemical composition of the gastrointestinal content. The activity of this receptor may stimulate alpha gustducin, mediate PLC-beta-2 activation and lead to the gating of TRPM5. In Pan paniscus (Pygmy chimpanzee), this protein is Taste receptor type 2 member 39 (TAS2R39).